The following is a 356-amino-acid chain: TPR repeat-containing protein P27G11.02 (356 aa).

Residues 1 to 20 (MRMQWIWKSRRSLQNVFIRR) constitute a mitochondrion transit peptide. TPR repeat units follow at residues 194–227 (SRLF…TMAN) and 290–323 (AAAF…RKDD).

The protein resides in the mitochondrion. In Schizosaccharomyces pombe (strain 972 / ATCC 24843) (Fission yeast), this protein is TPR repeat-containing protein P27G11.02.